Reading from the N-terminus, the 87-residue chain is Sec-independent protein translocase protein TatA (87 aa).

A helical membrane pass occupies residues 1–21 (MGSFSIWHWLIVLLIVVMVFG). Positions 40 to 87 (KDGMKDGSTPEGTPASTTAATPPAGQVTNQQAHAADPGTIDVEAKHKG) are disordered. The span at 46–64 (GSTPEGTPASTTAATPPAG) shows a compositional bias: low complexity.

It belongs to the TatA/E family. The Tat system comprises two distinct complexes: a TatABC complex, containing multiple copies of TatA, TatB and TatC subunits, and a separate TatA complex, containing only TatA subunits. Substrates initially bind to the TatABC complex, which probably triggers association of the separate TatA complex to form the active translocon.

The protein resides in the cell inner membrane. In terms of biological role, part of the twin-arginine translocation (Tat) system that transports large folded proteins containing a characteristic twin-arginine motif in their signal peptide across membranes. TatA could form the protein-conducting channel of the Tat system. This is Sec-independent protein translocase protein TatA from Paracidovorax citrulli (strain AAC00-1) (Acidovorax citrulli).